The chain runs to 125 residues: Large ribosomal subunit protein bL19 (125 aa).

Belongs to the bacterial ribosomal protein bL19 family.

Its function is as follows. This protein is located at the 30S-50S ribosomal subunit interface and may play a role in the structure and function of the aminoacyl-tRNA binding site. The sequence is that of Large ribosomal subunit protein bL19 from Synechococcus sp. (strain JA-2-3B'a(2-13)) (Cyanobacteria bacterium Yellowstone B-Prime).